The sequence spans 864 residues: DNA mismatch repair protein MutS (864 aa).

Residue 607–614 (GPNMGGKS) coordinates ATP.

The protein belongs to the DNA mismatch repair MutS family.

Its function is as follows. This protein is involved in the repair of mismatches in DNA. It is possible that it carries out the mismatch recognition step. This protein has a weak ATPase activity. The chain is DNA mismatch repair protein MutS from Neisseria gonorrhoeae (strain ATCC 700825 / FA 1090).